The sequence spans 594 residues: Chondroitin sulfate proteoglycan 5 (594 aa).

Residues 1-12 are compositionally biased toward polar residues; it reads MGVGGTSASDTA. A signal peptide spans 1 to 18; the sequence is MGVGGTSASDTALSLCPT. 2 disordered regions span residues 1–325 and 343–418; these read MGVG…PWGL and TTSF…SECR. Residues 19–481 are Extracellular-facing; the sequence is APEWPPRNGS…AIVTDFQVLC (463 aa). N-linked (GlcNAc...) asparagine glycans are attached at residues Asn26 and Asn44. The span at 140-181 shows a compositional bias: low complexity; it reads SPGLGLSSPGPNLGLPSLDLPNPNLGLPDPNLGLPNPSLGLP. Composition is skewed to pro residues over residues 182–195 and 219–229; these read SPGPTPDRPIPNPN and IPLPSPSPGPG. Residues 248–259 show a composition bias toward low complexity; it reads PQPSSSPAPAQR. Positions 298–310 are enriched in gly residues; that stretch reads GGHGPGGGHGAGG. Residues 338–377 form an interaction with TNC and TNR region; the sequence is ADFYPTTSFYAEGDDDAEEELEEDEEEEEEEDGGLEDENG. The segment covering 349–375 has biased composition (acidic residues); it reads EGDDDAEEELEEDEEEEEEEDGGLEDE. Asn413 and Asn425 each carry an N-linked (GlcNAc...) asparagine glycan. One can recognise an EGF-like domain in the interval 429–471; that stretch reads RSVCDLVPSYCHNGGQCYLVESHGAFCRCNTQDYTWHKGTRCE. Cystine bridges form between Cys432-Cys445, Cys439-Cys455, and Cys457-Cys470. A helical transmembrane segment spans residues 482–502; it reads VAVGSAALVLLLLFMLTVFFA. The Cytoplasmic portion of the chain corresponds to 503–594; it reads KKLYLLKTEN…GVPCLHNNLG (92 aa). The disordered stretch occupies residues 535–594; sequence TIAEGSHPNDDPGAPHKLQDPLKPGLKDEEPLSILSTAPEEGSKGEPGGCGVPCLHNNLG. Residues 541-564 are compositionally biased toward basic and acidic residues; sequence HPNDDPGAPHKLQDPLKPGLKDEE.

In terms of assembly, binds TNC and TNR. The 80 kDa form but not the 140 kDa form can bind TNC and TNR when expressed at the cell surface. Different forms exist: the 140 kDa form (also reported as 130 kDa), which probably consists of the entire protein, and the 38 and 80 kDa forms, which are probably cleaved in their N-terminus. Increase in synaptic activity, results in shedding of the extracellular domain and expression at the cell surface of a 38 kDa form. A form of 200 kDa has also been reported, which is probably hyperglycosylated. Post-translationally, N-glycosylated. In terms of processing, O-glycosylated; contains chondroitin sulfate glycans. Part-time proteoglycan, the 200 kDa form is the only one containing chondroitin sulfate glycans. Expressed in astroglial and neuronal surfaces in different parts of the embryonic brain. Expressed in adult brain and retina (at protein level).

It localises to the cell membrane. Its function is as follows. May function as a growth and differentiation factor involved in neuritogenesis and more particularly in neurite extension. The protein is Chondroitin sulfate proteoglycan 5 (CSPG5) of Gallus gallus (Chicken).